The primary structure comprises 192 residues: GTP cyclohydrolase-2 (192 aa).

GTP is bound at residue 50-54 (RLHSE). Positions 55, 66, and 68 each coordinate Zn(2+). GTP is bound by residues 92-94 (EGR) and T114. Catalysis depends on D126, which acts as the Proton acceptor. R128 (nucleophile) is an active-site residue. GTP contacts are provided by T149 and K154.

This sequence belongs to the GTP cyclohydrolase II family. Zn(2+) serves as cofactor.

The catalysed reaction is GTP + 4 H2O = 2,5-diamino-6-hydroxy-4-(5-phosphoribosylamino)-pyrimidine + formate + 2 phosphate + 3 H(+). Its pathway is cofactor biosynthesis; riboflavin biosynthesis; 5-amino-6-(D-ribitylamino)uracil from GTP: step 1/4. Catalyzes the conversion of GTP to 2,5-diamino-6-ribosylamino-4(3H)-pyrimidinone 5'-phosphate (DARP), formate and pyrophosphate. The chain is GTP cyclohydrolase-2 from Helicobacter acinonychis (strain Sheeba).